Reading from the N-terminus, the 340-residue chain is Ketol-acid reductoisomerase (NADP(+)) (340 aa).

Residues 3-182 (VQMEYEKDVK…GAARVGLLET (180 aa)) enclose the KARI N-terminal Rossmann domain. NADP(+) is bound by residues 26-29 (YGSQ), Arg-49, Ser-53, and 83-86 (DEIQ). Residue His-108 is part of the active site. Residue Gly-134 coordinates NADP(+). The KARI C-terminal knotted domain occupies 183–328 (TYKEETEEDL…AELRKAMPFV (146 aa)). Residues Asp-191, Glu-195, Glu-227, and Glu-231 each coordinate Mg(2+). Residue Ser-252 participates in substrate binding.

Belongs to the ketol-acid reductoisomerase family. It depends on Mg(2+) as a cofactor.

It carries out the reaction (2R)-2,3-dihydroxy-3-methylbutanoate + NADP(+) = (2S)-2-acetolactate + NADPH + H(+). The enzyme catalyses (2R,3R)-2,3-dihydroxy-3-methylpentanoate + NADP(+) = (S)-2-ethyl-2-hydroxy-3-oxobutanoate + NADPH + H(+). It participates in amino-acid biosynthesis; L-isoleucine biosynthesis; L-isoleucine from 2-oxobutanoate: step 2/4. The protein operates within amino-acid biosynthesis; L-valine biosynthesis; L-valine from pyruvate: step 2/4. In terms of biological role, involved in the biosynthesis of branched-chain amino acids (BCAA). Catalyzes an alkyl-migration followed by a ketol-acid reduction of (S)-2-acetolactate (S2AL) to yield (R)-2,3-dihydroxy-isovalerate. In the isomerase reaction, S2AL is rearranged via a Mg-dependent methyl migration to produce 3-hydroxy-3-methyl-2-ketobutyrate (HMKB). In the reductase reaction, this 2-ketoacid undergoes a metal-dependent reduction by NADPH to yield (R)-2,3-dihydroxy-isovalerate. This is Ketol-acid reductoisomerase (NADP(+)) from Streptococcus pneumoniae (strain JJA).